A 400-amino-acid polypeptide reads, in one-letter code: NADH-quinone oxidoreductase subunit D (400 aa).

The protein belongs to the complex I 49 kDa subunit family. NDH-1 is composed of 14 different subunits. Subunits NuoB, C, D, E, F, and G constitute the peripheral sector of the complex.

The protein resides in the cell inner membrane. It carries out the reaction a quinone + NADH + 5 H(+)(in) = a quinol + NAD(+) + 4 H(+)(out). In terms of biological role, NDH-1 shuttles electrons from NADH, via FMN and iron-sulfur (Fe-S) centers, to quinones in the respiratory chain. The immediate electron acceptor for the enzyme in this species is believed to be a menaquinone. Couples the redox reaction to proton translocation (for every two electrons transferred, four hydrogen ions are translocated across the cytoplasmic membrane), and thus conserves the redox energy in a proton gradient. The protein is NADH-quinone oxidoreductase subunit D of Chlorobium chlorochromatii (strain CaD3).